A 144-amino-acid chain; its full sequence is Superoxide dismutase [Mn], mitochondrial (144 aa).

Mn(2+)-binding residues include histidine 10, histidine 58, and aspartate 143.

The protein belongs to the iron/manganese superoxide dismutase family. In terms of assembly, homotetramer. Mn(2+) is required as a cofactor.

Its subcellular location is the mitochondrion matrix. It carries out the reaction 2 superoxide + 2 H(+) = H2O2 + O2. Functionally, destroys superoxide anion radicals which are normally produced within the cells and which are toxic to biological systems. This chain is Superoxide dismutase [Mn], mitochondrial, found in Apostichopus californicus (California sea cucumber).